The primary structure comprises 295 residues: Inward rectifier potassium channel Kirbac3.1 (295 aa).

Residues 1–47 (MTGGMKPPARKPRILNSDGSSNITRLGLEKRGWLDDHYHDLLTVSWP) are Cytoplasmic-facing. A helical membrane pass occupies residues 48–69 (VFITLITGLYLVTNALFALAYL). Over 70–82 (ACGDVIENARPGS) the chain is Extracellular. Residues 83 to 95 (FTDAFFFSVQTMA) constitute an intramembrane region (helical; Pore-forming). The Selectivity filter signature appears at 96–100 (TIGYG). A helical transmembrane segment spans residues 107–131 (PLANTLVTLEALCGMLGLAVAASLI). Topologically, residues 132 to 295 (YARFTRPTAG…DLGKFHEIAQ (164 aa)) are cytoplasmic.

Belongs to the inward rectifier-type potassium channel (TC 1.A.2.1) family. KCNJ11 subfamily. As to quaternary structure, homotetramer.

Its subcellular location is the membrane. Its function is as follows. Inward rectifier potassium channel that mediates potassium uptake into the cell. Inward rectifier potassium channels are characterized by a greater tendency to allow potassium to flow into the cell rather than out of it. The inward rectification may be achieved by the blockage of outward current by cytoplasmic divalent metal ions and polyamines. Complements an E.coli mutant that is defective in K(+) uptake. This chain is Inward rectifier potassium channel Kirbac3.1, found in Paramagnetospirillum magnetotacticum (Aquaspirillum magnetotacticum).